Here is a 194-residue protein sequence, read N- to C-terminus: Xanthine phosphoribosyltransferase (194 aa).

Residues Leu20 and Asn27 each contribute to the xanthine site. 128–132 (ANGQA) is a 5-phospho-alpha-D-ribose 1-diphosphate binding site. Position 156 (Lys156) interacts with xanthine.

This sequence belongs to the purine/pyrimidine phosphoribosyltransferase family. Xpt subfamily. As to quaternary structure, homodimer.

Its subcellular location is the cytoplasm. The catalysed reaction is XMP + diphosphate = xanthine + 5-phospho-alpha-D-ribose 1-diphosphate. It functions in the pathway purine metabolism; XMP biosynthesis via salvage pathway; XMP from xanthine: step 1/1. Its function is as follows. Converts the preformed base xanthine, a product of nucleic acid breakdown, to xanthosine 5'-monophosphate (XMP), so it can be reused for RNA or DNA synthesis. The protein is Xanthine phosphoribosyltransferase of Oceanobacillus iheyensis (strain DSM 14371 / CIP 107618 / JCM 11309 / KCTC 3954 / HTE831).